A 623-amino-acid chain; its full sequence is Peptide transporter PTR2 (623 aa).

Disordered regions lie at residues 1 to 20 and 31 to 58; these read MVSSDFENEKQPDVVQVLTD and DYEDPKNYSTNYVDDYNPKGLRRPTPQE. 11 consecutive transmembrane segments (helical) span residues 134 to 154, 163 to 183, 191 to 211, 250 to 270, 277 to 297, 385 to 405, 418 to 438, 448 to 468, 499 to 519, 529 to 549, and 557 to 577; these read ALTNLLTFLAYVFPLIGGYLG, AIQWGVFFGFVAHLFFIFASI, NAGLGLCVIAIITLSAGSGLM, ITNVFYLAINIGAFLQIATSY, FWLAFFVPMILYIIVPIFLFI, IIFNLADSGLGSVETSLIGAM, FNPLTIIILIPILEYGLYPLL, IWRICFGFVVCSFSQIAGFVL, LFILAAAGECWAYTTAYELAY, LVYALFLVMSAFSAALSLAIT, and LHWVFLAIGLAGFLCAIVMLA.

It belongs to the major facilitator superfamily. Proton-dependent oligopeptide transporter (POT/PTR) (TC 2.A.17) family.

The protein localises to the membrane. Functionally, uptake of small peptides. The chain is Peptide transporter PTR2 (PTR2) from Candida albicans (Yeast).